Here is a 73-residue protein sequence, read N- to C-terminus: Mu-conotoxin PIIIA (73 aa).

An N-terminal signal peptide occupies residues 1 to 19 (MSKLGVLLTICLLLFPITA). Positions 20-49 (LPMDGDQPADRLAERMQDNISSEEHPFEKR) are excised as a propeptide. Gln-50 bears the Pyrrolidone carboxylic acid mark. 6 disulfides stabilise this stretch: Cys-53-Cys-65, Cys-53-Cys-70, Cys-54-Cys-70, Cys-54-Cys-71, Cys-60-Cys-65, and Cys-60-Cys-71. Pro-57 is subject to 4-hydroxyproline. Position 67 is a 4-hydroxyproline (Pro-67). Cys-71 carries the cysteine amide modification.

It belongs to the conotoxin M superfamily. Post-translationally, 3D-structure of 3 disulfide-bond connectivities isomers is described (PIIIA-1 (C1-C5, C2-C6, C3-C4), PIIIA-2 (C1-C4, C2-C5, C3-C6) and PIIIA-3 (C1-C2, C3-C4, C5-C6)). Only PIIIA-2 contains the cysteine connectivity described as typical for native mu-conotoxins. However, PIIIA-1 is more potent than PIIIA-2, suggesting another possible disulfid connectivity. For this reason, both connectivities have been indicated in features. In terms of tissue distribution, expressed by the venom duct.

It is found in the secreted. Functionally, mu-conotoxins block voltage-gated sodium channels (Nav). This toxin potently blocks rNav1.4/SCN4A (IC(50)=36-41 nM). It also moderately blocks rNav1.1/SCN1A (IC(50)=120 nM), rNav1.2/SCN2A (IC(50)=620 nM), rNav1.3/SCN3A (IC(50)=3.2 uM), mNav1.6/SCN8A (IC(50)=100 nM). This inhibition is reversible. The block of Nav1.1, Nav1.2, and Nav1.6 is modified when beta-subunits are coexpressed with alpha subunits. Hence, blocks of channels containing the beta-1 and beta-3 subunits are more potent (compared to channels without beta subunits), whereas blocks of channels containing the beta-2 and beta-4 are less potent (compared to channels without beta subunits). In vivo, this peptide causes flaccid paralysis in both mice and fish. The chain is Mu-conotoxin PIIIA from Conus purpurascens (Purple cone).